A 333-amino-acid polypeptide reads, in one-letter code: Late embryogenesis abundant protein 1 (333 aa).

Disordered regions lie at residues 1 to 20 and 116 to 246; these read MASR…RRAA and KDYT…GQGQ. Residues 3 to 52 adopt a coiled-coil conformation; sequence SRQDRREARAEADARRAAEEIARARDERVMQAEVDARSAADEIARARADR. Composition is skewed to basic and acidic residues over residues 116–163, 172–219, and 227–241; these read KDYT…KDAV, EATK…DATK, and DKAR…DATD.

It belongs to the LEA type 4 family.

In Oryza sativa subsp. indica (Rice), this protein is Late embryogenesis abundant protein 1 (LEA1).